A 162-amino-acid chain; its full sequence is Auxin-responsive protein SAUR36 (162 aa).

It belongs to the ARG7 family. Expressed in embryo, endosperm, growing hypocotyls and shoot apical meristems.

Functionally, acts a positive regulator of leaf senescence and may mediate auxin-induced leaf senescence. Plays a role in the regulation of seed germination by gibberellins and abscisic acid (ABA). Plays a role in the regulation of light-dependent hypocotyl elongation. This is Auxin-responsive protein SAUR36 from Arabidopsis thaliana (Mouse-ear cress).